Consider the following 431-residue polypeptide: RNA-binding motif, single-stranded-interacting protein 3 (431 aa).

The disordered stretch occupies residues 28 to 53 (YAPAPHPMAPPSPSTNSSSNSSGEQL). The span at 31–40 (APHPMAPPSP) shows a compositional bias: pro residues. 2 consecutive RRM domains span residues 56–129 (TNLY…MAKQ) and 135–220 (TNLY…FADG). Disordered regions lie at residues 220–242 (GGQK…PREG) and 393–431 (TSPQ…QSKP). The span at 401-411 (SSQDSSGQQQQ) shows a compositional bias: low complexity.

The protein resides in the cytoplasm. Its function is as follows. Binds poly(A) and poly(U) oligoribonucleotides. The protein is RNA-binding motif, single-stranded-interacting protein 3 (Rbms3) of Mus musculus (Mouse).